Reading from the N-terminus, the 137-residue chain is Ribosomal RNA large subunit methyltransferase H (137 aa).

Residues leucine 56, glycine 85, and 104-109 (LSPLTL) contribute to the S-adenosyl-L-methionine site.

Belongs to the RNA methyltransferase RlmH family. As to quaternary structure, homodimer.

It localises to the cytoplasm. The enzyme catalyses pseudouridine(1915) in 23S rRNA + S-adenosyl-L-methionine = N(3)-methylpseudouridine(1915) in 23S rRNA + S-adenosyl-L-homocysteine + H(+). Functionally, specifically methylates the pseudouridine at position 1915 (m3Psi1915) in 23S rRNA. In Thermus thermophilus (strain ATCC BAA-163 / DSM 7039 / HB27), this protein is Ribosomal RNA large subunit methyltransferase H.